A 302-amino-acid polypeptide reads, in one-letter code: MKIAILSRNKKLYSTRRLQEAALARGHEVDIIDTLHCYMDISSNKPSVRFKGEPLPQYDAIIPRIGASITFYGTAVVRQFEMMGSFSVNESVAISRSRDKLRSMQLLSRKGIGLPRTGFAHSPDNIKDLIANVGGAPVVIKLLEGTQGIGVVLADTNKAAESIVEAFMGIKANILVQEYIKEAGGADIRCFVVGGKVVAAMKRQGAPGEFRSNLHRGGSAALVKLTAVERATAVSAAGAMGLNVCGVDLLRSSHGPVVMEVNSSPGLEGIEAATSKDVANMIIEFIENKKSKPHSTKTRGNG.

The region spanning 104–287 (MQLLSRKGIG…VANMIIEFIE (184 aa)) is the ATP-grasp domain. Residues lysine 141, 178–179 (EY), aspartate 187, and 211–213 (RSN) contribute to the ATP site. Aspartate 248, glutamate 260, and asparagine 262 together coordinate Mg(2+). 3 residues coordinate Mn(2+): aspartate 248, glutamate 260, and asparagine 262.

This sequence belongs to the RimK family. Mg(2+) is required as a cofactor. The cofactor is Mn(2+).

This is Probable alpha-L-glutamate ligase 1 from Pseudoalteromonas atlantica (strain T6c / ATCC BAA-1087).